A 163-amino-acid chain; its full sequence is Protein-export protein SecB (163 aa).

Belongs to the SecB family. Homotetramer, a dimer of dimers. One homotetramer interacts with 1 SecA dimer.

The protein localises to the cytoplasm. Functionally, one of the proteins required for the normal export of preproteins out of the cell cytoplasm. It is a molecular chaperone that binds to a subset of precursor proteins, maintaining them in a translocation-competent state. It also specifically binds to its receptor SecA. The polypeptide is Protein-export protein SecB (Azotobacter vinelandii (strain DJ / ATCC BAA-1303)).